A 619-amino-acid polypeptide reads, in one-letter code: P-granule-associated protein deps-1 (619 aa).

The segment at 62–101 (NFDNIEEAKNLERRSKIPLKFGEVILWNESDCDHDKRIIL) is required for prg-1 binding. Composition is skewed to low complexity over residues 563–592 (SRATSARTTPAGSSIGSRSSIQSRASAATS) and 600–619 (GPSSRRTPSGTPQSSTSSRV). A disordered region spans residues 563 to 619 (SRATSARTTPAGSSIGSRSSIQSRASAATSVSSNRFVGPSSRRTPSGTPQSSTSSRV).

Interacts (via N-terminus) with prg-1; the interaction is direct. May interact with edg-1. Expressed in germ cells.

The protein localises to the cytoplasmic granule. It localises to the cytoplasm. Its subcellular location is the perinuclear region. In terms of biological role, component of P-granules which is required for P-granule formation and integrity in adult germ cells. Promotes the accumulation of glh-1 mRNA and localization of pgl-1 to P-granules. Involved in RNA-mediated gene silencing (RNAi) in the germline. In particular, it is required for piwi-interacting RNA (piRNA) gene silencing and positively regulates the formation of secondary 22G-RNAs, which are RNA-dependent RNA polymerase-derived endo-siRNAs, typically 22 nucleotides in length with a 5'guanosine residue. Its role in RNAi may also be through positively regulating the expression of the dsRNA-binding protein rde-4. Plays a role in small RNA-directed transgenerational epigenetic inheritance. This Caenorhabditis elegans protein is P-granule-associated protein deps-1.